Reading from the N-terminus, the 367-residue chain is uncharacterized protein (367 aa).

The chain crosses the membrane as a helical span at residues 6–26 (IAAGVVVALAAVWCTSAWFTG).

To E.coli YdgA and YihF.

The protein resides in the membrane. This is an uncharacterized protein from Haemophilus influenzae (strain ATCC 51907 / DSM 11121 / KW20 / Rd).